The following is a 65-amino-acid chain: Large ribosomal subunit protein bL35 (65 aa).

This sequence belongs to the bacterial ribosomal protein bL35 family.

This chain is Large ribosomal subunit protein bL35, found in Enterobacter sp. (strain 638).